The primary structure comprises 139 residues: Plastocyanin (139 aa).

The first 34 residues, 1–34, serve as a signal peptide directing secretion; that stretch reads MKLIAASLRRLSLAVLTVLLVVSSFAVFTPSAAA. The 101-residue stretch at 35–135 folds into the Plastocyanin-like domain; that stretch reads ETYTVKLGSD…HRGAGMVGKI (101 aa). Cu cation contacts are provided by histidine 73, cysteine 123, histidine 126, and methionine 131.

The protein belongs to the plastocyanin family. The cofactor is Cu(2+).

It localises to the cellular thylakoid membrane. Functionally, participates in electron transfer between P700 and the cytochrome b6-f complex in photosystem I. The sequence is that of Plastocyanin (petE) from Trichormus variabilis (strain ATCC 29413 / PCC 7937) (Anabaena variabilis).